A 484-amino-acid chain; its full sequence is Calcium uniporter protein, mitochondrial (484 aa).

The transit peptide at 1 to 33 (MGHVLGGTLLAANRLARPPAVVLGKPRVCCWRA) directs the protein to the mitochondrion. Topologically, residues 34 to 304 (SPWPVIVSSA…CDLLAHKGAH (271 aa)) are mitochondrial matrix. Disordered regions lie at residues 59–104 (ARYE…KGRL) and 188–227 (YTGGNKSNDGRREESNGNGSNVASYSGLGREGPSKGDTHW). Over residues 61 to 82 (YEARGRSTTQRKVDDRPWHRES) the composition is skewed to basic and acidic residues. The segment covering 83–93 (SGSLPKSTSPD) has biased composition (polar residues). A helical transmembrane segment spans residues 305–326 (ALAKGGFAALAAWWGIVYYVTF). Residues 327–334 (HTDMGWDL) are Mitochondrial intermembrane-facing. Positions 332-340 (WDLVEPITY) match the Selectivity filter motif. A helical membrane pass occupies residues 335 to 355 (VEPITYLAGLASIMGGYLWFL). Position 336 (Glu-336) interacts with Ca(2+). Over 356 to 484 (FISRDLSYKA…NEAAANVPGD (129 aa)) the chain is Mitochondrial matrix. Composition is skewed to basic and acidic residues over residues 426-435 (KEVLEEEKGG) and 452-462 (DHDHDHDHVSH). The disordered stretch occupies residues 426–484 (KEVLEEEKGGKARKREQEDEDGDGDDDHDHDHDHVSHGAELQGQDILHANEAAANVPGD).

Belongs to the MCU (TC 1.A.77) family. As to quaternary structure, homotetramer, assembles in a dimer or dimers configuration with two interfaces.

The protein resides in the mitochondrion inner membrane. The catalysed reaction is Ca(2+)(in) = Ca(2+)(out). Inhibited by ruthenium red or its derivative Ru360. Its function is as follows. Highly selective calcium channel localized to the inner mitochondrial membrane, which mediates calcium uptake into the mitochondrial matrix. Mitochondrial calcium homeostasis plays key roles in cellular physiology and regulates ATP production, cytoplasmic calcium signals and activation of cell death pathways. Sufficient to operate as a pore-forming channel without the need of calcium-sensor or auxiliary subunit. The sequence is that of Calcium uniporter protein, mitochondrial from Metarhizium acridum (strain CQMa 102).